We begin with the raw amino-acid sequence, 341 residues long: Serpentine receptor class epsilon-12 (341 aa).

7 helical membrane-spanning segments follow: residues 30–50, 57–77, 101–121, 140–160, 167–187, 230–250, and 262–282; these read TAFYVADTINMMFYIWVLFSA, FTLVSGTQYVIHFFDNLAIIV, AMTFSVYCIVAAMCSLPFSIL, YISYALVFLLNFIGIIGAILL, IFVVAFLMILNLFALLTNQFL, LNFIILYMGFMNVCLVISVLF, and ICSLALDASIFFYSFAIPQIM.

This sequence belongs to the nematode receptor-like protein sre family.

Its subcellular location is the membrane. The chain is Serpentine receptor class epsilon-12 (sre-12) from Caenorhabditis elegans.